The following is a 554-amino-acid chain: Carboxypeptidase Y homolog A (554 aa).

The signal sequence occupies residues 1 to 17; it reads MRISASTVLLGAASAAS. The propeptide occupies 18–137; that stretch reads AASFQNQAQQ…QLDNFNLRVK (120 aa). Disulfide bonds link Cys191–Cys431, Cys325–Cys339, Cys349–Cys372, Cys356–Cys365, and Cys394–Cys401. Asn222 is a glycosylation site (N-linked (GlcNAc...) asparagine). Ser278 is a catalytic residue. Asp470 is a catalytic residue. A glycan (N-linked (GlcNAc...) asparagine) is linked at Asn518. The active site involves His529.

It belongs to the peptidase S10 family.

The protein resides in the vacuole. It carries out the reaction Release of a C-terminal amino acid with broad specificity.. Its function is as follows. Vacuolar carboxypeptidase involved in degradation of small peptides. Digests preferentially peptides containing an aliphatic or hydrophobic residue in P1' position, as well as methionine, leucine or phenylalanine in P1 position of ester substrate. This Sordaria macrospora (strain ATCC MYA-333 / DSM 997 / K(L3346) / K-hell) protein is Carboxypeptidase Y homolog A (CPYA).